A 455-amino-acid polypeptide reads, in one-letter code: Bifunctional protein GlmU (455 aa).

Positions 1-227 (MLTDIVILAA…ATEALGVNDP (227 aa)) are pyrophosphorylase. Residues 8-11 (LAAG), Lys22, Gln73, 78-79 (GT), 100-102 (YGD), Gly137, Glu152, Asn167, and Asn225 each bind UDP-N-acetyl-alpha-D-glucosamine. Mg(2+) is bound at residue Asp102. Residue Asn225 participates in Mg(2+) binding. A linker region spans residues 228–248 (VQLAILERVFQRQQLRALQMQ). Residues 249-455 (GLRVADPARV…HWQRPRRDKK (207 aa)) are N-acetyltransferase. Residues Arg331 and Lys349 each coordinate UDP-N-acetyl-alpha-D-glucosamine. His361 functions as the Proton acceptor in the catalytic mechanism. 2 residues coordinate UDP-N-acetyl-alpha-D-glucosamine: Tyr364 and Asn375. Acetyl-CoA contacts are provided by residues Ala378, 384-385 (NY), Ser403, Ala421, and Arg438. The disordered stretch occupies residues 420-455 (GAGSTITKEVPPGGLTLSRSPQRTIPHWQRPRRDKK).

The protein in the N-terminal section; belongs to the N-acetylglucosamine-1-phosphate uridyltransferase family. This sequence in the C-terminal section; belongs to the transferase hexapeptide repeat family. In terms of assembly, homotrimer. Mg(2+) is required as a cofactor.

Its subcellular location is the cytoplasm. The enzyme catalyses alpha-D-glucosamine 1-phosphate + acetyl-CoA = N-acetyl-alpha-D-glucosamine 1-phosphate + CoA + H(+). The catalysed reaction is N-acetyl-alpha-D-glucosamine 1-phosphate + UTP + H(+) = UDP-N-acetyl-alpha-D-glucosamine + diphosphate. It participates in nucleotide-sugar biosynthesis; UDP-N-acetyl-alpha-D-glucosamine biosynthesis; N-acetyl-alpha-D-glucosamine 1-phosphate from alpha-D-glucosamine 6-phosphate (route II): step 2/2. The protein operates within nucleotide-sugar biosynthesis; UDP-N-acetyl-alpha-D-glucosamine biosynthesis; UDP-N-acetyl-alpha-D-glucosamine from N-acetyl-alpha-D-glucosamine 1-phosphate: step 1/1. It functions in the pathway bacterial outer membrane biogenesis; LPS lipid A biosynthesis. Functionally, catalyzes the last two sequential reactions in the de novo biosynthetic pathway for UDP-N-acetylglucosamine (UDP-GlcNAc). The C-terminal domain catalyzes the transfer of acetyl group from acetyl coenzyme A to glucosamine-1-phosphate (GlcN-1-P) to produce N-acetylglucosamine-1-phosphate (GlcNAc-1-P), which is converted into UDP-GlcNAc by the transfer of uridine 5-monophosphate (from uridine 5-triphosphate), a reaction catalyzed by the N-terminal domain. This is Bifunctional protein GlmU from Acidithiobacillus ferrooxidans (strain ATCC 23270 / DSM 14882 / CIP 104768 / NCIMB 8455) (Ferrobacillus ferrooxidans (strain ATCC 23270)).